We begin with the raw amino-acid sequence, 492 residues long: UPF0236 protein TTE0402 (492 aa).

Belongs to the UPF0236 family.

The protein is UPF0236 protein TTE0402 of Caldanaerobacter subterraneus subsp. tengcongensis (strain DSM 15242 / JCM 11007 / NBRC 100824 / MB4) (Thermoanaerobacter tengcongensis).